Consider the following 439-residue polypeptide: Gap junction gamma-2 protein (439 aa).

Topologically, residues 1-25 (MTNMSWSFLTRLLEEIHNHSTFVGK) are cytoplasmic. A helical transmembrane segment spans residues 26 to 46 (VWLTVLVVFRIVLTAVGGEAI). The Extracellular segment spans residues 47 to 78 (YSDEQAKFTCNTRQPGCDNVCYDAFAPLSHVR). Residues 79–99 (FWVFQIVVISTPSVMYLGYAV) form a helical membrane-spanning segment. The Cytoplasmic portion of the chain corresponds to 100 to 216 (HRLARASEQE…EGLMRVYVAQ (117 aa)). The segment at 108 to 178 (QERRRALRRR…AEEAGAEEAC (71 aa)) is disordered. Residues 112–125 (RALRRRPGPRRAPR) show a composition bias toward basic residues. The segment covering 140-174 (DLGEEEPMLGLGEEEEEEETGAAEGAGEEAEEAGA) has biased composition (acidic residues). A helical membrane pass occupies residues 217-237 (LVARAAFEVAFLVGQYLLYGF). Topologically, residues 238–265 (EVRPFFPCSRQPCPHVVDCFVSRPTEKT) are extracellular. Residues 266-286 (VFLLVMYVVSCLCLLLNLCEM) traverse the membrane as a helical segment. The Cytoplasmic segment spans residues 287–439 (AHLGLGSAQD…SRDGKTTVWI (153 aa)). The tract at residues 364 to 439 (AGDRDRDSSP…SRDGKTTVWI (76 aa)) is disordered. Ser-371 is subject to Phosphoserine. Residues 378-393 (PAASRGPPRAGAPASR) are compositionally biased toward low complexity.

It belongs to the connexin family. Gamma-type subfamily. In terms of assembly, a connexon is composed of a hexamer of connexins. Interacts with TJP1. Expressed in central nervous system, in sciatic nerve and sural nerve. Also detected in skeletal muscles.

The protein resides in the cell membrane. It localises to the cell junction. It is found in the gap junction. Functionally, one gap junction consists of a cluster of closely packed pairs of transmembrane channels, the connexons, through which materials of low MW diffuse from one cell to a neighboring cell. May play a role in myelination in central and peripheral nervous systems. This is Gap junction gamma-2 protein (GJC2) from Homo sapiens (Human).